Reading from the N-terminus, the 196-residue chain is MNEAVSPSALSTLFTDARTHNGWRETPVSDETLRELYALMKWGPTSANCSPARIVFIRTAEGKERLRPALSSGNLQKTLTAPVTAIVAWDSEFYERLPQLFPHGDARSWFTSSPQLAEETAFRNSSMQAAYLIIACRALGLDTGPMSGFDRQHVDDAFFAVSTLKSNLLINIGYGDSSKLFARLPRLSFEEACGLL.

It belongs to the nitroreductase family. HadB/RutE subfamily. FMN serves as cofactor.

The catalysed reaction is 3-hydroxypropanoate + NADP(+) = 3-oxopropanoate + NADPH + H(+). In terms of biological role, may reduce toxic product malonic semialdehyde to 3-hydroxypropionic acid, which is excreted. The protein is Probable malonic semialdehyde reductase RutE of Shigella dysenteriae serotype 1 (strain Sd197).